The chain runs to 260 residues: 14-3-3-like protein (260 aa).

The interval 240 to 260 (DMQDDGGDEIKEAAPKPDEQY) is disordered. The span at 247–260 (DEIKEAAPKPDEQY) shows a compositional bias: basic and acidic residues.

The protein belongs to the 14-3-3 family.

The polypeptide is 14-3-3-like protein (Oenothera elata subsp. hookeri (Hooker's evening primrose)).